The following is a 251-amino-acid chain: Cell division protein ZapD (251 aa).

This sequence belongs to the ZapD family. As to quaternary structure, interacts with FtsZ.

It localises to the cytoplasm. Functionally, cell division factor that enhances FtsZ-ring assembly. Directly interacts with FtsZ and promotes bundling of FtsZ protofilaments, with a reduction in FtsZ GTPase activity. The sequence is that of Cell division protein ZapD from Paraburkholderia xenovorans (strain LB400).